Reading from the N-terminus, the 120-residue chain is NADH-ubiquinone oxidoreductase chain 3 (120 aa).

3 helical membrane passes run F7–L27, F62–F82, and M89–I109.

This sequence belongs to the complex I subunit 3 family.

It is found in the mitochondrion membrane. It catalyses the reaction a ubiquinone + NADH + 5 H(+)(in) = a ubiquinol + NAD(+) + 4 H(+)(out). Functionally, core subunit of the mitochondrial membrane respiratory chain NADH dehydrogenase (Complex I) that is believed to belong to the minimal assembly required for catalysis. Complex I functions in the transfer of electrons from NADH to the respiratory chain. The immediate electron acceptor for the enzyme is believed to be ubiquinone. The sequence is that of NADH-ubiquinone oxidoreductase chain 3 (nad3) from Dictyostelium discoideum (Social amoeba).